Reading from the N-terminus, the 309-residue chain is Probable manganese-dependent inorganic pyrophosphatase (309 aa).

The Mn(2+) site is built by His9, Asp13, Asp15, Asp75, His97, and Asp149.

The protein belongs to the PPase class C family. Mn(2+) serves as cofactor.

It localises to the cytoplasm. It catalyses the reaction diphosphate + H2O = 2 phosphate + H(+). In Bacillus mycoides (strain KBAB4) (Bacillus weihenstephanensis), this protein is Probable manganese-dependent inorganic pyrophosphatase.